A 122-amino-acid chain; its full sequence is MQDNSSHSRESASAGDDPLGIDKLTVDYDYLLYKIRDYVQSIQLDTTELCKKQNEVMVNGIIENTIDKNIAKFKELLEKCDTLENHYEMLNQLAIITDTFKERIAEAVNNYNXLKKGASKSK.

The span at 1-10 (MQDNSSHSRE) shows a compositional bias: basic and acidic residues. The disordered stretch occupies residues 1–21 (MQDNSSHSRESASAGDDPLGI). Positions 63–95 (ENTIDKNIAKFKELLEKCDTLENHYEMLNQLAI) form a coiled coil.

Belongs to the BLOC1S4 family. As to quaternary structure, component of the biogenesis of lysosome-related organelles complex-1 (BLOC-1) composed of at least BLI1, BLS1, CNL1, KXD1, SNN1 and VAB2.

It localises to the cytoplasm. Its function is as follows. Component of the biogenesis of lysosome-related organelles complex-1 (BLOC-1), a complex that is involved in endosomal cargo sorting. The polypeptide is Biogenesis of lysosome-related organelles complex 1 subunit CNL1 (CLN1) (Saccharomyces cerevisiae (strain Lalvin QA23) (Baker's yeast)).